The sequence spans 344 residues: Aurora kinase B (344 aa).

Threonine 35 is modified (phosphothreonine). Positions 46-65 (NAQPTAAPGQKVVENSSGTP) are disordered. Phosphoserine is present on serine 62. Threonine 64 is modified (phosphothreonine). The region spanning 77-327 (FEIGRPLGKG…LAQVSAHPWV (251 aa)) is the Protein kinase domain. ATP-binding positions include 83-91 (LGKGKFGNV) and lysine 106. Aspartate 200 (proton acceptor) is an active-site residue. Position 215 is an N6-acetyllysine (lysine 215). Serine 227 is subject to Phosphoserine. A Phosphothreonine; by autocatalysis modification is found at threonine 232.

It belongs to the protein kinase superfamily. Ser/Thr protein kinase family. Aurora subfamily. In terms of assembly, component of the chromosomal passenger complex (CPC) composed of at least BIRC5/survivin, CDCA8/borealin, INCENP, AURKB or AURKC; predominantly independent AURKB- and AURKC-containing complexes exist. Associates with RACGAP1 during M phase. Interacts with SPDYC; this interaction may be required for proper localization of active, Thr-232-phosphorylated AURKB form during prometaphase and metaphase. Interacts with p53/TP53. Interacts (via the middle kinase domain) with NOC2L (via the N- and C-terminus domains). Interacts with CDCA1. Interacts with EVI5. Interacts with JTB. Interacts with NDC80. Interacts with PSMA3. Interacts with RNF2/RING1B. Interacts with SEPTIN1. Interacts with SIRT2. Interacts with TACC1. Interacts with TTC28. In terms of processing, the phosphorylation of Thr-232 requires the binding to INCENP and occurs by means of an autophosphorylation mechanism. Thr-232 phosphorylation is indispensable for the AURKB kinase activity. Post-translationally, acetylated at Lys-215 by KAT5 at kinetochores, increasing AURKB activity and promoting accurate chromosome segregation in mitosis. Ubiquitinated by different BCR (BTB-CUL3-RBX1) E3 ubiquitin ligase complexes. Ubiquitinated by the BCR(KLHL9-KLHL13) E3 ubiquitin ligase complex, ubiquitination leads to removal from mitotic chromosomes and is required for cytokinesis. During anaphase, the BCR(KLHL21) E3 ubiquitin ligase complex recruits the CPC complex from chromosomes to the spindle midzone and mediates the ubiquitination of AURKB. Ubiquitination of AURKB by BCR(KLHL21) E3 ubiquitin ligase complex may not lead to its degradation by the proteasome. Deubiquitinated by USP35; inhibiting CDH1-mediated degradation of AURKB.

It localises to the nucleus. Its subcellular location is the chromosome. It is found in the centromere. The protein resides in the kinetochore. The protein localises to the cytoplasm. It localises to the cytoskeleton. Its subcellular location is the spindle. It is found in the midbody. The enzyme catalyses L-seryl-[protein] + ATP = O-phospho-L-seryl-[protein] + ADP + H(+). It catalyses the reaction L-threonyl-[protein] + ATP = O-phospho-L-threonyl-[protein] + ADP + H(+). Its activity is regulated as follows. Activity is greatly increased when AURKB is within the CPC complex. In particular, AURKB-phosphorylated INCENP acts as an activator of AURKB. Positive feedback between HASPIN and AURKB contributes to CPC localization. Its function is as follows. Serine/threonine-protein kinase component of the chromosomal passenger complex (CPC), a complex that acts as a key regulator of mitosis. The CPC complex has essential functions at the centromere in ensuring correct chromosome alignment and segregation and is required for chromatin-induced microtubule stabilization and spindle assembly. Involved in the bipolar attachment of spindle microtubules to kinetochores and is a key regulator for the onset of cytokinesis during mitosis. Required for central/midzone spindle assembly and cleavage furrow formation. Key component of the cytokinesis checkpoint, a process required to delay abscission to prevent both premature resolution of intercellular chromosome bridges and accumulation of DNA damage: phosphorylates CHMP4C, leading to retain abscission-competent VPS4 (VPS4A and/or VPS4B) at the midbody ring until abscission checkpoint signaling is terminated at late cytokinesis. AURKB phosphorylates the CPC complex subunits BIRC5/survivin, CDCA8/borealin and INCENP. Phosphorylation of INCENP leads to increased AURKB activity. Other known AURKB substrates involved in centromeric functions and mitosis are CENPA, DES/desmin, GPAF, KIF2C, NSUN2, RACGAP1, SEPTIN1, VIM/vimentin, HASPIN, and histone H3. A positive feedback loop involving HASPIN and AURKB contributes to localization of CPC to centromeres. Phosphorylation of VIM controls vimentin filament segregation in cytokinetic process, whereas histone H3 is phosphorylated at 'Ser-10' and 'Ser-28' during mitosis (H3S10ph and H3S28ph, respectively). AURKB is also required for kinetochore localization of BUB1 and SGO1. Phosphorylation of p53/TP53 negatively regulates its transcriptional activity. Key regulator of active promoters in resting B- and T-lymphocytes: acts by mediating phosphorylation of H3S28ph at active promoters in resting B-cells, inhibiting RNF2/RING1B-mediated ubiquitination of histone H2A and enhancing binding and activity of the USP16 deubiquitinase at transcribed genes. Acts as an inhibitor of CGAS during mitosis: catalyzes phosphorylation of the N-terminus of CGAS during the G2-M transition, blocking CGAS liquid phase separation and activation, and thereby preventing CGAS-induced autoimmunity. Phosphorylates KRT5 during anaphase and telophase. Phosphorylates ATXN10 which promotes phosphorylation of ATXN10 by PLK1 and may play a role in the regulation of cytokinesis and stimulating the proteasomal degradation of ATXN10. In Bos taurus (Bovine), this protein is Aurora kinase B (AURKB).